Reading from the N-terminus, the 205-residue chain is High frequency lysogenization protein HflD homolog (205 aa).

Belongs to the HflD family.

The protein localises to the cytoplasm. It localises to the cell inner membrane. The polypeptide is High frequency lysogenization protein HflD homolog (Vibrio atlanticus (strain LGP32) (Vibrio splendidus (strain Mel32))).